The sequence spans 837 residues: Endo-1,4-beta-xylanase Z (837 aa).

The N-terminal stretch at 1 to 28 (MSRKLFSVLLVGLMLMTSLLVTISSTSA) is a signal peptide. Residues 299 to 420 (TRIEAEDYDG…PVNIDWFTFG (122 aa)) enclose the CBM6 domain. Residues 424–492 (SSTGLGDLNG…ILRIITEFPG (69 aa)) form the Dockerin domain. One can recognise a GH10 domain in the interval 512–833 (TISGNALRDY…KPAYNAIKEA (322 aa)). The active-site Proton donor is glutamate 645. Catalysis depends on glutamate 754, which acts as the Nucleophile. Cysteine 783 and cysteine 789 are oxidised to a cystine.

Belongs to the glycosyl hydrolase 10 (cellulase F) family.

The catalysed reaction is Endohydrolysis of (1-&gt;4)-beta-D-xylosidic linkages in xylans.. This Acetivibrio thermocellus (strain ATCC 27405 / DSM 1237 / JCM 9322 / NBRC 103400 / NCIMB 10682 / NRRL B-4536 / VPI 7372) (Clostridium thermocellum) protein is Endo-1,4-beta-xylanase Z (xynZ).